The primary structure comprises 153 residues: SKP1-like protein 9 (153 aa).

The tract at residues 95–153 (IKAANYLNIKSLFDLACQTVAEIIKGNTPEQIREFFNIENDLTPEEEAAIRRENKWAFE) is interaction with the F-box domain of F-box proteins.

It belongs to the SKP1 family. As to quaternary structure, part of a SCF (SKP1-cullin-F-box) protein ligase complex. Interacts with CPR1/CPR30 and At3g61590. As to expression, expressed in leaves, shoot apical meristem (SAM), roots, flowers and pollen.

Its subcellular location is the nucleus. It participates in protein modification; protein ubiquitination. Functionally, involved in ubiquitination and subsequent proteasomal degradation of target proteins. Together with CUL1, RBX1 and a F-box protein, it forms a SCF E3 ubiquitin ligase complex. The functional specificity of this complex depends on the type of F-box protein. In the SCF complex, it serves as an adapter that links the F-box protein to CUL1. The sequence is that of SKP1-like protein 9 (ASK9) from Arabidopsis thaliana (Mouse-ear cress).